We begin with the raw amino-acid sequence, 169 residues long: Non-specific lipid transfer protein GPI-anchored 11 (169 aa).

An N-terminal signal peptide occupies residues 1–23 (MAYATILMIFSVVALMSGERAHA). 4 cysteine pairs are disulfide-bonded: cysteine 27/cysteine 70, cysteine 37/cysteine 54, cysteine 55/cysteine 95, and cysteine 68/cysteine 105. Serine 146 carries GPI-anchor amidated serine lipidation. Positions 147-169 (SDASLLSVSFAFVIFMALISSFY) are cleaved as a propeptide — removed in mature form.

Belongs to the plant LTP family. In terms of tissue distribution, expressed in a vascular-specific manner, mainly in roots, and, to a lower extent, in hypocotyls, seedlings stems and flowers.

It is found in the cell membrane. The protein localises to the secreted. Functionally, probable lipid transfer protein. Proteoglycan-like factor that exhibits xylogen activity consisting in mediating local and inductive cell-cell interactions required for xylem differentiation. This is Non-specific lipid transfer protein GPI-anchored 11 from Arabidopsis thaliana (Mouse-ear cress).